The following is a 209-amino-acid chain: Thymidylate kinase (209 aa).

Residue 10–17 (GLEGAGKS) coordinates ATP.

It belongs to the thymidylate kinase family.

It catalyses the reaction dTMP + ATP = dTDP + ADP. In terms of biological role, phosphorylation of dTMP to form dTDP in both de novo and salvage pathways of dTTP synthesis. The protein is Thymidylate kinase of Photobacterium profundum (strain SS9).